The chain runs to 1002 residues: Collagen alpha-2(I) chain (1002 aa).

The disordered stretch occupies residues 1 to 1002; the sequence is SGGFDFSFLP…PGPPGPPGAS (1002 aa). A 4-hydroxyproline mark is found at proline 10, proline 13, proline 28, and proline 34. Residues 17-60 are compositionally biased toward low complexity; it reads GPMGLMGPRGPPGASGAPGPQGFQGPAGEPGEPGQTGPAGARGP. The residue at position 89 (lysine 89) is a 5-hydroxylysine; alternate. O-linked (Gal...) hydroxylysine; alternate glycosylation is present at lysine 89. 2 stretches are compositionally biased toward low complexity: residues 145-166 and 211-232; these read SRGSDGSVGPVGPAGPIGSAGP and PGANGLTGAKGAAGLPGVAGAP. Gly residues predominate over residues 266-275; that stretch reads GESGGKGEPG. Over residues 276-286 the composition is skewed to low complexity; that stretch reads SAGPQGPPGSS. Residues 308-317 show a composition bias toward gly residues; the sequence is GLRGGPGSRG. The span at 330–346 shows a compositional bias: low complexity; that stretch reads PAGARGASGPAGVRGPS. A 4-hydroxyproline mark is found at proline 352 and proline 355. A compositionally biased stretch (low complexity) spans 381-400; the sequence is LPGIDGRPGPIGPAGARGEA. A compositionally biased stretch (gly residues) spans 449 to 458; the sequence is GVQGGKGEQG. Composition is skewed to low complexity over residues 505–522 and 534–544; these read PGESGAVGPSGAIGSRGP and EPGVVGAPGTA. The span at 545–554 shows a compositional bias: gly residues; it reads GPAGSGGLPG. Composition is skewed to low complexity over residues 577 to 621 and 628 to 648; these read VGTT…PRGS and VGPAGPNGFAGPAGAAGQPGA. Positions 649–658 are enriched in basic and acidic residues; it reads KGERGTKGPK. Positions 666 to 676 are enriched in low complexity; that stretch reads PTGPVGSAGPA. A compositionally biased stretch (gly residues) spans 686 to 695; the sequence is GSRGDGGPPG. Positions 697–706 are enriched in low complexity; it reads TGFPGAAGRT. Gly residues predominate over residues 743 to 752; sequence GETGAGGPPG. 2 stretches are compositionally biased toward low complexity: residues 760 to 787 and 795 to 805; these read SGEPGTAGPPGTAGPQGLLGAPGILGLP and LPGVAGAVGEP. The span at 806–828 shows a compositional bias: gly residues; that stretch reads GPLGIGPPGARGPSGGVGPGVNG. Basic and acidic residues predominate over residues 833–851; sequence AGRDGPPGRDGLPGHKGER. Residues 853–898 show a composition bias toward low complexity; it reads YAGNAGPVGAAGAPGPHGAVGPAGKHGNRGEPGPVGSAGPVGALGP. Over residues 908-919 the composition is skewed to basic and acidic residues; it reads RGDKGEAGDKGP. The span at 987-1002 shows a compositional bias: pro residues; that stretch reads SGPPGPPGPPGPPGAS.

This sequence belongs to the fibrillar collagen family. As to quaternary structure, trimers of one alpha 2(I) and two alpha 1(I) chains. Interacts (via C-terminus) with TMEM131 (via PapD-L domain); the interaction is direct and is involved in assembly and TRAPPIII ER-to-Golgi transport complex-dependent secretion of collagen. Post-translationally, prolines at the third position of the tripeptide repeating unit (G-X-Y) are hydroxylated in some or all of the chains. Expressed in bones.

Its subcellular location is the secreted. The protein resides in the extracellular space. It localises to the extracellular matrix. Its function is as follows. Type I collagen is a member of group I collagen (fibrillar forming collagen). The chain is Collagen alpha-2(I) chain from Glossotherium robustum (Ground sloth).